The chain runs to 377 residues: UPF0754 membrane protein YheB (377 aa).

Helical transmembrane passes span 1–21 and 357–377; these read MGIAGTFIFMIVIGAAIGAVT and YLGGLLGGIIGAIQALFVILF.

It belongs to the UPF0754 family.

The protein localises to the cell membrane. The sequence is that of UPF0754 membrane protein YheB (yheB) from Bacillus subtilis (strain 168).